Reading from the N-terminus, the 391-residue chain is Polyketide synthase 5 (391 aa).

Cys164 is a catalytic residue.

Belongs to the thiolase-like superfamily. Chalcone/stilbene synthases family. Homodimer. Expressed in fruits.

The catalysed reaction is (E)-4-coumaroyl-CoA + 3 malonyl-CoA + 3 H(+) = 2',4,4',6'-tetrahydroxychalcone + 3 CO2 + 4 CoA. It participates in secondary metabolite biosynthesis; flavonoid biosynthesis. Polyketide synthase producing naringenin chalcone. Can use p-coumaryl-CoA as substrate. This is Polyketide synthase 5 (PKS5) from Rubus idaeus (Raspberry).